The chain runs to 348 residues: Protein pelota homolog (348 aa).

It belongs to the eukaryotic release factor 1 family. Pelota subfamily. In terms of assembly, monomer. It depends on a divalent metal cation as a cofactor.

It is found in the cytoplasm. Functionally, may function in recognizing stalled ribosomes, interact with stem-loop structures in stalled mRNA molecules, and effect endonucleolytic cleavage of the mRNA. May play a role in the release non-functional ribosomes and degradation of damaged mRNAs. Has endoribonuclease activity. In Methanococcus maripaludis (strain C7 / ATCC BAA-1331), this protein is Protein pelota homolog.